The primary structure comprises 434 residues: Eukaryotic translation initiation factor 3 subunit E (434 aa).

In terms of domain architecture, PCI spans 219 to 392 (FFNHPKGRDL…GHVVMGTQPL (174 aa)).

Belongs to the eIF-3 subunit E family. Component of the eukaryotic translation initiation factor 3 (eIF-3) complex. The eIF-3 complex interacts with pix. Interacts with mxt.

The protein resides in the cytoplasm. Component of the eukaryotic translation initiation factor 3 (eIF-3) complex, which is involved in protein synthesis of a specialized repertoire of mRNAs and, together with other initiation factors, stimulates binding of mRNA and methionyl-tRNAi to the 40S ribosome. The eIF-3 complex specifically targets and initiates translation of a subset of mRNAs involved in cell proliferation. The protein is Eukaryotic translation initiation factor 3 subunit E (eIF3-S6) of Drosophila virilis (Fruit fly).